We begin with the raw amino-acid sequence, 212 residues long: Nucleoside triphosphate pyrophosphatase (212 aa).

Catalysis depends on Asp79, which acts as the Proton acceptor.

The protein belongs to the Maf family. A divalent metal cation serves as cofactor.

The protein resides in the cytoplasm. It catalyses the reaction a ribonucleoside 5'-triphosphate + H2O = a ribonucleoside 5'-phosphate + diphosphate + H(+). It carries out the reaction a 2'-deoxyribonucleoside 5'-triphosphate + H2O = a 2'-deoxyribonucleoside 5'-phosphate + diphosphate + H(+). Nucleoside triphosphate pyrophosphatase. May have a dual role in cell division arrest and in preventing the incorporation of modified nucleotides into cellular nucleic acids. This chain is Nucleoside triphosphate pyrophosphatase, found in Nocardia farcinica (strain IFM 10152).